A 320-amino-acid polypeptide reads, in one-letter code: Dual oxidase maturation factor 2 (320 aa).

At methionine 1–serine 21 the chain is on the extracellular side. A helical transmembrane segment spans residues valine 22–leucine 42. Over proline 43 to arginine 56 the chain is Cytoplasmic. Residues valine 57–phenylalanine 77 form a helical membrane-spanning segment. Residues valine 78 to threonine 183 lie on the Extracellular side of the membrane. N-linked (GlcNAc...) asparagine glycans are attached at residues asparagine 84, asparagine 109, and asparagine 121. The helical transmembrane segment at leucine 184–leucine 204 threads the bilayer. The Cytoplasmic segment spans residues tyrosine 205–glycine 206. Residues glycine 207–isoleucine 227 form a helical membrane-spanning segment. The Extracellular segment spans residues serine 228 to glycine 247. A helical transmembrane segment spans residues alanine 248–valine 268. Topologically, residues serine 269–leucine 320 are cytoplasmic.

This sequence belongs to the DUOXA family. As to quaternary structure, heterodimer with DUXA2; disulfide-linked. Interacts with CSNK1G2. N-glycosylated. Specifically expressed in thyroid. Also detected in salivary glands.

Its subcellular location is the endoplasmic reticulum membrane. Its function is as follows. Required for the maturation and the transport from the endoplasmic reticulum to the plasma membrane of functional DUOX2. May play a role in thyroid hormone synthesis. This Homo sapiens (Human) protein is Dual oxidase maturation factor 2 (DUOXA2).